Consider the following 497-residue polypeptide: Cobyric acid synthase (497 aa).

Residues 251-443 (DLKIGVVWYP…LHGLFDNDFF (193 aa)) enclose the GATase cobBQ-type domain. The active-site Nucleophile is Cys333. Residue His435 is part of the active site.

Belongs to the CobB/CobQ family. CobQ subfamily.

The protein operates within cofactor biosynthesis; adenosylcobalamin biosynthesis. Functionally, catalyzes amidations at positions B, D, E, and G on adenosylcobyrinic A,C-diamide. NH(2) groups are provided by glutamine, and one molecule of ATP is hydrogenolyzed for each amidation. The chain is Cobyric acid synthase from Carboxydothermus hydrogenoformans (strain ATCC BAA-161 / DSM 6008 / Z-2901).